A 355-amino-acid polypeptide reads, in one-letter code: 6-aminohexanoate-oligomer endohydrolase (355 aa).

Catalysis depends on T267, which acts as the Nucleophile.

It belongs to the peptidase S58 family. Heterotetramer composed of 4 alpha/beta heterodimers. Exists at the monomer/dimer/trimer equilibrium in aqueous solution. In terms of processing, expressed as an inactive precursor that is cleaved autocatalytically at Asn266/Thr267 to generate an active enzyme composed of an alpha subunit and a beta subunit.

It carries out the reaction [N-(6-aminohexanoyl)]n + H2O = [N-(6-aminohexanoyl)]n-x + [N-(6-aminohexanoyl)]x.. It functions in the pathway xenobiotic degradation; nylon-6 oligomer degradation. Involved in the degradation of nylon-6 oligomers. Degrades cyclic and linear oligomers of 6-aminohexanoate (Ahx) with a degree of polymerization greater than three by an endo-type mode. Cannot use Ahx cyclic dimer or the Ahx linear dimer. The chain is 6-aminohexanoate-oligomer endohydrolase from Paenarthrobacter ureafaciens.